We begin with the raw amino-acid sequence, 44 residues long: Cytochrome b559 subunit beta (44 aa).

Residues 19–35 (WLSVHALGVPSVFFLGA) traverse the membrane as a helical segment. His23 lines the heme pocket.

The protein belongs to the PsbE/PsbF family. Heterodimer of an alpha subunit and a beta subunit. PSII is composed of 1 copy each of membrane proteins PsbA, PsbB, PsbC, PsbD, PsbE, PsbF, PsbH, PsbI, PsbJ, PsbK, PsbL, PsbM, PsbT, PsbX, PsbY, PsbZ, Psb30/Ycf12, peripheral proteins PsbO, CyanoQ (PsbQ), PsbU, PsbV and a large number of cofactors. It forms dimeric complexes. The cofactor is heme b.

The protein resides in the cellular thylakoid membrane. In terms of biological role, this b-type cytochrome is tightly associated with the reaction center of photosystem II (PSII). PSII is a light-driven water:plastoquinone oxidoreductase that uses light energy to abstract electrons from H(2)O, generating O(2) and a proton gradient subsequently used for ATP formation. It consists of a core antenna complex that captures photons, and an electron transfer chain that converts photonic excitation into a charge separation. The chain is Cytochrome b559 subunit beta from Synechococcus elongatus (strain ATCC 33912 / PCC 7942 / FACHB-805) (Anacystis nidulans R2).